The following is an 89-amino-acid chain: Omega-theraphotoxin-Ba1c (89 aa).

The first 23 residues, 1-23, serve as a signal peptide directing secretion; it reads MRSLTLAAVLACSLLLVFHTSAA. Residues 24–50 constitute a propeptide that is removed on maturation; sequence EEHEAQEGYLMNPGDTDTALATVDDER. Cystine bridges form between Cys-54–Cys-75, Cys-58–Cys-81, and Cys-67–Cys-86.

The protein belongs to the neurotoxin 12 (Hwtx-2) family. 06 (TXP1) subfamily. Expressed by the venom gland.

The protein resides in the secreted. Its function is as follows. Inhibits voltage-gated calcium channels (Cav) in rat cerebellar granule cells. Has insecticidal activity. The chain is Omega-theraphotoxin-Ba1c from Brachypelma albiceps (Mexican golden redrump tarantula).